Reading from the N-terminus, the 77-residue chain is Putative defensin-like protein 120 (77 aa).

A signal peptide spans M1–G26. Cystine bridges form between C30–C75, C39–C60, C44–C69, and C48–C71.

It belongs to the DEFL family.

The protein localises to the secreted. This is Putative defensin-like protein 120 (LCR56) from Arabidopsis thaliana (Mouse-ear cress).